The chain runs to 1080 residues: Zorya protein ZorD (1080 aa).

Positions 596–779 constitute a Helicase ATP-binding domain; that stretch reads LRSPEETAGC…WSLFDFAQPG (184 aa). The Helicase C-terminal domain maps to 904–1069; it reads KLNWLLKILA…DMLCATPDLS (166 aa).

In terms of biological role, component of antiviral defense system Zorya type I, composed of ZorA, ZorB, ZorC and ZorD. Expression of Zorya type I in E.coli (strain MG1655) confers 10,000-fold resistance to phage SECphi27, 100-fold resistance to lambda, and 10-fold resistance to T7. While most T7 infected Zorya-containing cells undergo abortive infection, a minority produce viable phage progeny. These eventually accumulate to a high multiplicity of infection, leading to culture collapse by 2 hours after initial infection. ZorA and ZorB probably assemble in the cell inner membrane and exert their effect there. This may have ATPase activity. In Escherichia coli O139:H28 (strain E24377A / ETEC), this protein is Zorya protein ZorD.